A 503-amino-acid polypeptide reads, in one-letter code: Basic immunoglobulin-like variable motif-containing protein (503 aa).

A compositionally biased stretch (basic and acidic residues) spans 1 to 26 (MPNVAETERSNDSGNGEHKSERKSPE). Disordered regions lie at residues 1–33 (MPNVAETERSNDSGNGEHKSERKSPEENLQGAV), 152–184 (TTNSKHKSGNAKKQVSKRKTSDKKGRYQKECPQ), and 438–469 (ESQPPTHAQGIAKSESEDNISKKQHGRLGRSF). Over residues 155–172 (SKHKSGNAKKQVSKRKTS) the composition is skewed to basic residues. Residues 173 to 184 (DKKGRYQKECPQ) are compositionally biased toward basic and acidic residues.

This sequence belongs to the BIVM family. As to expression, widely expressed. Expressed at higher level in spleen, ovary, small intestine, colon, peripheral blood leukocytes and liver. Also expressed in testis, ovary, aorta, appendix, trachea, pituitary gland, bladder, uterus, spinal cord, salivary gland, stomach, mammary gland and bone marrow. Weakly or not expressed in fetal spleen, adult thymus and certain cancer cell lines.

Its subcellular location is the cytoplasm. It is found in the nucleus. The sequence is that of Basic immunoglobulin-like variable motif-containing protein (BIVM) from Homo sapiens (Human).